Reading from the N-terminus, the 119-residue chain is Large ribosomal subunit protein uL24 (119 aa).

This sequence belongs to the universal ribosomal protein uL24 family. As to quaternary structure, part of the 50S ribosomal subunit.

One of two assembly initiator proteins, it binds directly to the 5'-end of the 23S rRNA, where it nucleates assembly of the 50S subunit. Its function is as follows. Located at the polypeptide exit tunnel on the outside of the subunit. This is Large ribosomal subunit protein uL24 from Methanococcus vannielii.